The sequence spans 239 residues: Phosphoadenosine 5'-phosphosulfate reductase (239 aa).

The active-site Nucleophile; cysteine thiosulfonate intermediate is Cys-235.

This sequence belongs to the PAPS reductase family. CysH subfamily.

It localises to the cytoplasm. It catalyses the reaction [thioredoxin]-disulfide + sulfite + adenosine 3',5'-bisphosphate + 2 H(+) = [thioredoxin]-dithiol + 3'-phosphoadenylyl sulfate. It participates in sulfur metabolism; hydrogen sulfide biosynthesis; sulfite from sulfate: step 3/3. In terms of biological role, catalyzes the formation of sulfite from phosphoadenosine 5'-phosphosulfate (PAPS) using thioredoxin as an electron donor. This is Phosphoadenosine 5'-phosphosulfate reductase from Thiocapsa roseopersicina.